We begin with the raw amino-acid sequence, 204 residues long: Somatotropin (204 aa).

An N-terminal signal peptide occupies residues 1 to 17 (MDRAILLLSVLSVGVSS). Gln-18 is subject to Pyrrolidone carboxylic acid. His-35 contributes to the Zn(2+) binding site. An intrachain disulfide couples Cys-69 to Cys-177. Residue Glu-186 participates in Zn(2+) binding. The cysteines at positions 194 and 202 are disulfide-linked.

It belongs to the somatotropin/prolactin family.

The protein resides in the secreted. In terms of biological role, growth hormone plays an important role in growth control and is involved in the regulation of several anabolic processes. Implicated as an osmoregulatory substance important for seawater adaptation. The polypeptide is Somatotropin (gh) (Dicentrarchus labrax (European seabass)).